Here is an 87-residue protein sequence, read N- to C-terminus: Defensin alpha-like protein 1 (87 aa).

An N-terminal signal peptide occupies residues 1-19; that stretch reads MKTLILLSALVLLALQVQA. A propeptide spanning residues 20 to 56 is cleaved from the precursor; the sequence is DPIQEAEEETKTEEQPADEDQDVSVSFEGPEASAVQD. The span at 23-41 shows a compositional bias: acidic residues; sequence QEAEEETKTEEQPADEDQD. The tract at residues 23–43 is disordered; that stretch reads QEAEEETKTEEQPADEDQDVS.

It belongs to the alpha-defensin family. Antiparallel homodimer; disulfide-linked. Specifically expressed in small intestine (jejunum and ileum). Probably expressed by Paneth cells at the base of intestinal crypts. Coexpressed with MMP7 in small intestine.

It is found in the secreted. In terms of biological role, intestinal defense peptide. Has potent antibacterial activity against Gram-negative bacteria E.coli O157:H7, S.typhimurium DT104, and K.pneumoniae; and against Gram-positive bacteria S.aureus, methicillin-resistant S.aureus and L.monocytogenes. Remains active in the presence of NaCl and Mg(2+). Probably functions by disrupting bacterial membrane integrity. However, does not show cytotoxic activity towards human intestinal cells. The chain is Defensin alpha-like protein 1 from Rattus norvegicus (Rat).